A 583-amino-acid chain; its full sequence is Exonuclease 3'-5' domain-containing protein 2 (583 aa).

At 1–11 (MTRESAVATKR) the chain is on the mitochondrial intermembrane side. Residues 12–29 (NWAILAAGVGLVYVLVRH) form a helical membrane-spanning segment. The Cytoplasmic segment spans residues 30–583 (RHRLLCPLRR…AGLDAKIKET (554 aa)). Positions 62–228 (TTQWVLNELK…AIYQKLCRDL (167 aa)) constitute a 3'-5' exonuclease domain. The a divalent metal cation site is built by D83, E85, and D213. Residues 266–281 (GSGVTRSKGSTQSKSN) are compositionally biased toward polar residues. Residues 266–286 (GSGVTRSKGSTQSKSNKWVPK) are disordered.

The protein belongs to the EXD2 family. In terms of assembly, homodimer. It depends on Mg(2+) as a cofactor. Mn(2+) serves as cofactor.

Its subcellular location is the mitochondrion membrane. Functionally, 3'-5' exoribonuclease required for mitochondrial metabolism. This is Exonuclease 3'-5' domain-containing protein 2 from Drosophila melanogaster (Fruit fly).